The following is a 487-amino-acid chain: Pentatricopeptide repeat-containing protein At5g61370, mitochondrial (487 aa).

The transit peptide at 1–90 (MMSTTVRLNR…TSPRRLLRFF (90 aa)) directs the protein to the mitochondrion. 8 PPR repeats span residues 137–171 (DKQT…SCPQ), 172–202 (DGFT…HKDV), 207–241 (ELSV…GITP), 242–283 (DLFC…KIQP), 284–318 (TSMS…GCDP), 319–353 (DTGS…GFRP), 354–388 (ERKF…SVGG), and 389–423 (YGQV…DVTL). Positions 466–487 (TKPKLKLKPKRRSKTKKKNLQH) are disordered.

Belongs to the PPR family. P subfamily.

The protein resides in the mitochondrion. The sequence is that of Pentatricopeptide repeat-containing protein At5g61370, mitochondrial from Arabidopsis thaliana (Mouse-ear cress).